Here is a 292-residue protein sequence, read N- to C-terminus: MQHLIDKANTLMEALPYIRRFSGKTIVIKYGGHAMADEALKESFALDVIMLKSLGINPVVVHGGGPQINETLKRYGIVSEFVKGMRVTDAATMQVVEMVLTGQVNKEVVGYLNQHGGRAVGLSGKDGNLLLCRKLLQEVRQDDGTVESVDIGFVGDVVKVNQELIQTLEHGKFIPVIAPVGVGEQGESYNVNADLVAGRVAGALRAEKLILLTDVAGVKDKAGALLSSIRLDTVPGLIDDGVITGGMIPKVTCCVDAIEEGVRKASIIDGRVLHAVLLEIFTDVGVGTEIHR.

Residues 64–65, R86, and N190 contribute to the substrate site; that span reads GG.

Belongs to the acetylglutamate kinase family. ArgB subfamily.

The protein localises to the cytoplasm. The catalysed reaction is N-acetyl-L-glutamate + ATP = N-acetyl-L-glutamyl 5-phosphate + ADP. It participates in amino-acid biosynthesis; L-arginine biosynthesis; N(2)-acetyl-L-ornithine from L-glutamate: step 2/4. Its function is as follows. Catalyzes the ATP-dependent phosphorylation of N-acetyl-L-glutamate. The sequence is that of Acetylglutamate kinase from Geobacter sulfurreducens (strain ATCC 51573 / DSM 12127 / PCA).